The following is a 386-amino-acid chain: Zinc finger protein 385A (386 aa).

The segment at 74–98 (ISCNICQIRFNSQSQAEAHYKGNRH) adopts a Matrin-type 1 zinc-finger fold. Residues 90–193 (EAHYKGNRHA…ASLPGGSKEE (104 aa)) are disordered. Positions 103–121 (KGIEAAKTRGREPGVREPG) are enriched in basic and acidic residues. The necessary for binding to ITPR1, CEBPA and p53/TP53 mRNAs stretch occupies residues 145–351 (NGLGPAPGSP…AGSPLSLRPA (207 aa)). At Ser185 the chain carries Phosphoserine. The Matrin-type 2 zinc-finger motif lies at 201-225 (LYCALCKVAVNSLSQLEAHNKGTKH). Position 248 is a phosphothreonine (Thr248). The Matrin-type 3 zinc finger occupies 261-285 (FHCEICNVKVNSEVQLKQHISSRRH). The tract at residues 279–309 (HISSRRHRDGVAGKPNPLLSRHKKSRGAGEL) is disordered.

In terms of assembly, interacts with ELAVL1; the interaction is indirect, mRNA-dependent and may regulate p53/TP53 expression. Interacts with p53/TP53; the interaction is direct and enhances p53/TP53 transactivation functions on cell-cycle arrest target genes, resulting in growth arrest. Post-translationally, ubiquitinated upon prolonged exposure to genotoxic stress, which leads to proteasomal degradation of ZNF385A and releases p53/TP53 from cell-cycle arrest target gene promoters. As to expression, expressed predominantly in the retina.

It localises to the cytoplasm. The protein localises to the nucleus. Its subcellular location is the nucleolus. It is found in the cell projection. The protein resides in the dendrite. Its function is as follows. RNA-binding protein that affects the localization and the translation of a subset of mRNA. May play a role in adipogenesis through binding to the 3'-UTR of CEBPA mRNA and regulation of its translation. Targets ITPR1 mRNA to dendrites in Purkinje cells, and may regulate its activity-dependent translation. With ELAVL1, binds the 3'-UTR of p53/TP53 mRNAs to control their nuclear export induced by CDKN2A. Hence, may regulate p53/TP53 expression and mediate in part the CDKN2A anti-proliferative activity. May also bind CCNB1 mRNA. Alternatively, may also regulate p53/TP53 activity through direct protein-protein interaction. Interacts with p53/TP53 and promotes cell-cycle arrest over apoptosis enhancing preferentially the DNA binding and transactivation of p53/TP53 on cell-cycle arrest target genes over proapoptotic target genes. May also regulate the ubiquitination and stability of CDKN1A promoting DNA damage-induced cell cycle arrest. Also plays a role in megakaryocytes differentiation. This is Zinc finger protein 385A (ZNF385A) from Homo sapiens (Human).